A 313-amino-acid polypeptide reads, in one-letter code: Putative S-adenosyl-L-methionine-dependent methyltransferase MAP_3563 (313 aa).

S-adenosyl-L-methionine contacts are provided by residues aspartate 139 and 168–169; that span reads DL.

It belongs to the UPF0677 family.

Exhibits S-adenosyl-L-methionine-dependent methyltransferase activity. This Mycolicibacterium paratuberculosis (strain ATCC BAA-968 / K-10) (Mycobacterium paratuberculosis) protein is Putative S-adenosyl-L-methionine-dependent methyltransferase MAP_3563.